A 610-amino-acid polypeptide reads, in one-letter code: MRVSAGLMIGGSCVATAATILNAFLINKQFYPSIVYLSKSNASMAVIYVQGIVLVYLMFQLLKSILFGDLRAAEAEHLSERTWHAVLETCLAFTVFRDDFSAIFVMQFIGLLFIKCFHWLADDRVDMMERSPVITLRFHLRMMTVLAALGFADSYFVSSAYFTTITRGASAQIVFGFEYAILLALVLHVTIKYLLHMHDLRNPQSWDNKAVYLLYAELFINLIRCLLYGFFAVVMLRVHTFPLFSVRPFYQSVRALHKAFLDVILSRRAINAMNSQFPVVSAEDLAAMDATCIICREEMTVDASPKRLPCSHVFHAHCLRSWFQRQQTCPTCRTDIWQGRNGAAAGGNAADAAANVADANVAGAQIGAGMPPFLPFLGHQFGFPQQPAGAGGAQPGAAQAGGQPGPFPHQIFYAPAPANRPEFMNLIPPPPLPMAGPPGMFPMMPPPPLPQVNTTQGTSSETPPVNPSYSQLSTEELRRMEGESREALLARLQAMDNIMVLLESAQMQMIQLATVTPIRPRPVVPSDESEQEAPGPSTDQVTSEEQEIPATSSAPSIFRTESPSTSSTAPSTSSPVTASSTPTTSSTRTPEAEEVRQRRLARLLGENANQ.

The first 23 residues, 1 to 23, serve as a signal peptide directing secretion; that stretch reads MRVSAGLMIGGSCVATAATILNA. The Lumenal segment spans residues 24-41; that stretch reads FLINKQFYPSIVYLSKSN. The helical transmembrane segment at 42–62 threads the bilayer; the sequence is ASMAVIYVQGIVLVYLMFQLL. The Cytoplasmic portion of the chain corresponds to 63-99; sequence KSILFGDLRAAEAEHLSERTWHAVLETCLAFTVFRDD. The chain crosses the membrane as a helical span at residues 100–120; that stretch reads FSAIFVMQFIGLLFIKCFHWL. The Lumenal portion of the chain corresponds to 121–144; that stretch reads ADDRVDMMERSPVITLRFHLRMMT. A helical transmembrane segment spans residues 145–165; the sequence is VLAALGFADSYFVSSAYFTTI. Topologically, residues 166–170 are cytoplasmic; that stretch reads TRGAS. The chain crosses the membrane as a helical span at residues 171–191; the sequence is AQIVFGFEYAILLALVLHVTI. Residues 192 to 215 are Lumenal-facing; that stretch reads KYLLHMHDLRNPQSWDNKAVYLLY. The chain crosses the membrane as a helical span at residues 216 to 236; that stretch reads AELFINLIRCLLYGFFAVVML. Residues 237-610 lie on the Cytoplasmic side of the membrane; sequence RVHTFPLFSV…ARLLGENANQ (374 aa). Residues 292-333 form an RING-type; atypical zinc finger; sequence CIICREEMTVDASPKRLPCSHVFHAHCLRSWFQRQQTCPTCR. Disordered stretches follow at residues 386 to 408, 452 to 480, and 521 to 610; these read QPAG…GPFP, VNTT…LRRM, and RPVV…NANQ. A compositionally biased stretch (polar residues) spans 452 to 474; the sequence is VNTTQGTSSETPPVNPSYSQLST. The segment covering 560-589 has biased composition (low complexity); the sequence is TESPSTSSTAPSTSSPVTASSTPTTSSTRT.

The protein belongs to the HRD1 family. As to quaternary structure, homodimer.

It localises to the endoplasmic reticulum membrane. It carries out the reaction S-ubiquitinyl-[E2 ubiquitin-conjugating enzyme]-L-cysteine + [acceptor protein]-L-lysine = [E2 ubiquitin-conjugating enzyme]-L-cysteine + N(6)-ubiquitinyl-[acceptor protein]-L-lysine.. The protein operates within protein modification; protein ubiquitination. Functionally, acts as an E3 ubiquitin-protein ligase which accepts ubiquitin specifically from endoplasmic reticulum-associated ubc-7 E2 ligase and transfers it to substrates, promoting their degradation. Component of the endoplasmic reticulum quality control (ERQC) system, which is also called the ER-associated degradation (ERAD) system, involved in ubiquitin-dependent degradation of misfolded endoplasmic reticulum proteins. Also promotes the degradation of normal but naturally short-lived proteins. Protects cells from ER stress-induced apoptosis. Thought to play a role together with hsp-3 in developmental growth and function of intestinal cells and to play a role together with hsp-4 in gonad formation. Plays a key role in the degradation of the potassium channel slo-1, perhaps acting directly, in targeting slo-1 to the ER-associated degradation pathway (ERAD), and also indirectly, via activation of the transcription factor skn-1, which mediates proteasomal homeostasis. This is E3 ubiquitin-protein ligase hrd-1 (sel-11) from Caenorhabditis elegans.